Here is a 360-residue protein sequence, read N- to C-terminus: Probable dual-specificity RNA methyltransferase RlmN (360 aa).

The active-site Proton acceptor is Glu-91. A Radical SAM core domain is found at 97-335; that stretch reads QHYGQSVCVT…CVVRQEHGTD (239 aa). A disulfide bond links Cys-104 and Cys-340. Residues Cys-111, Cys-115, and Cys-118 each coordinate [4Fe-4S] cluster. S-adenosyl-L-methionine contacts are provided by residues 163-164, Ser-195, 218-220, and Asn-296; these read GE and SLH. Cys-340 (S-methylcysteine intermediate) is an active-site residue.

Belongs to the radical SAM superfamily. RlmN family. [4Fe-4S] cluster serves as cofactor.

The protein localises to the cytoplasm. The enzyme catalyses adenosine(2503) in 23S rRNA + 2 reduced [2Fe-2S]-[ferredoxin] + 2 S-adenosyl-L-methionine = 2-methyladenosine(2503) in 23S rRNA + 5'-deoxyadenosine + L-methionine + 2 oxidized [2Fe-2S]-[ferredoxin] + S-adenosyl-L-homocysteine. The catalysed reaction is adenosine(37) in tRNA + 2 reduced [2Fe-2S]-[ferredoxin] + 2 S-adenosyl-L-methionine = 2-methyladenosine(37) in tRNA + 5'-deoxyadenosine + L-methionine + 2 oxidized [2Fe-2S]-[ferredoxin] + S-adenosyl-L-homocysteine. Functionally, specifically methylates position 2 of adenine 2503 in 23S rRNA and position 2 of adenine 37 in tRNAs. The sequence is that of Probable dual-specificity RNA methyltransferase RlmN from Streptococcus equi subsp. equi (strain 4047).